Here is a 152-residue protein sequence, read N- to C-terminus: Large ribosomal subunit protein uL15 (152 aa).

The tract at residues 1–66 (MRSNPMTLRL…GFEGGQTPMQ (66 aa)) is disordered. Gly residues predominate over residues 28–38 (RGIGSGLGKTA). Basic residues predominate over residues 39-52 (GRGHKGSFARKGGG).

Belongs to the universal ribosomal protein uL15 family. In terms of assembly, part of the 50S ribosomal subunit.

Binds to the 23S rRNA. The sequence is that of Large ribosomal subunit protein uL15 from Xanthomonas oryzae pv. oryzae (strain KACC10331 / KXO85).